We begin with the raw amino-acid sequence, 208 residues long: Imidazoleglycerol-phosphate dehydratase (208 aa).

The protein belongs to the imidazoleglycerol-phosphate dehydratase family.

It localises to the cytoplasm. The enzyme catalyses D-erythro-1-(imidazol-4-yl)glycerol 3-phosphate = 3-(imidazol-4-yl)-2-oxopropyl phosphate + H2O. It functions in the pathway amino-acid biosynthesis; L-histidine biosynthesis; L-histidine from 5-phospho-alpha-D-ribose 1-diphosphate: step 6/9. The protein is Imidazoleglycerol-phosphate dehydratase of Psychrobacter sp. (strain PRwf-1).